The chain runs to 384 residues: Chorismate synthase (384 aa).

Residues Arg-39 and Arg-45 each contribute to the NADP(+) site. FMN is bound by residues 130–132 (RSS), 248–249 (NA), Gly-292, 307–311 (KPIPT), and Arg-333.

This sequence belongs to the chorismate synthase family. As to quaternary structure, homotetramer. FMNH2 is required as a cofactor.

The enzyme catalyses 5-O-(1-carboxyvinyl)-3-phosphoshikimate = chorismate + phosphate. The protein operates within metabolic intermediate biosynthesis; chorismate biosynthesis; chorismate from D-erythrose 4-phosphate and phosphoenolpyruvate: step 7/7. Its function is as follows. Catalyzes the anti-1,4-elimination of the C-3 phosphate and the C-6 proR hydrogen from 5-enolpyruvylshikimate-3-phosphate (EPSP) to yield chorismate, which is the branch point compound that serves as the starting substrate for the three terminal pathways of aromatic amino acid biosynthesis. This reaction introduces a second double bond into the aromatic ring system. The protein is Chorismate synthase of Exiguobacterium sibiricum (strain DSM 17290 / CCUG 55495 / CIP 109462 / JCM 13490 / 255-15).